Here is a 182-residue protein sequence, read N- to C-terminus: Molybdopterin synthase catalytic subunit (182 aa).

Substrate is bound by residues 119–120 (HR), lysine 135, and 142–144 (KRE). The tract at residues 152-182 (VWRANRDGAPGQRIDTAEPAVGAGSGGEIDD) is disordered.

The protein belongs to the MoaE family. MOCS2B subfamily. As to quaternary structure, heterotetramer; composed of 2 small (MOCS2A) and 2 large (MOCS2B) subunits.

It localises to the cytoplasm. It carries out the reaction 2 [molybdopterin-synthase sulfur-carrier protein]-C-terminal-Gly-aminoethanethioate + cyclic pyranopterin phosphate + H2O = molybdopterin + 2 [molybdopterin-synthase sulfur-carrier protein]-C-terminal Gly-Gly + 2 H(+). The protein operates within cofactor biosynthesis; molybdopterin biosynthesis. In terms of biological role, catalytic subunit of the molybdopterin synthase complex, a complex that catalyzes the conversion of precursor Z into molybdopterin. Acts by mediating the incorporation of 2 sulfur atoms from thiocarboxylated MOCS2A into precursor Z to generate a dithiolene group. This Pyricularia oryzae (strain 70-15 / ATCC MYA-4617 / FGSC 8958) (Rice blast fungus) protein is Molybdopterin synthase catalytic subunit.